Consider the following 231-residue polypeptide: MKILAIKLLDYREWTERLGYDREWLIQKIQNKFMMKIHEIASQYNTFPLQLRFDNFLMIADGITTTQLAYMINDMQENLPVRIKSCLGYGKTPLEAQWNASICLNNQDDNEIKEYTDEKIAALHFDINFNTETLKYTSVYDSFIEITNIYVNLSRFLYKIGGILQYLGGDNYLGFISTESVNKVIEEFSDDNKIKVGIGIGKNARTAIRLATTSLEKIRNNREKTWHMEEE.

Belongs to the archaeal-type GTP cyclohydrolase family.

It catalyses the reaction GTP + 3 H2O = 2-amino-5-formylamino-6-(5-phospho-D-ribosylamino)pyrimidin-4(3H)-one + 2 phosphate + 2 H(+). Its function is as follows. Catalyzes the formation of 2-amino-5-formylamino-6-ribofuranosylamino-4(3H)-pyrimidinone ribonucleotide monophosphate and inorganic phosphate from GTP. Also has an independent pyrophosphate phosphohydrolase activity. The protein is GTP cyclohydrolase III of Saccharolobus solfataricus (strain ATCC 35092 / DSM 1617 / JCM 11322 / P2) (Sulfolobus solfataricus).